Consider the following 590-residue polypeptide: FAD-linked oxidoreductase malF (590 aa).

The first 18 residues, 1–18, serve as a signal peptide directing secretion; the sequence is MKYTATFALLILAIGIQT. 5 N-linked (GlcNAc...) asparagine glycosylation sites follow: asparagine 44, asparagine 80, asparagine 103, asparagine 178, and asparagine 396. The 187-residue stretch at 117 to 303 folds into the FAD-binding PCMH-type domain; the sequence is AQGRIPLYSA…TSVTLRAFAD (187 aa).

The protein belongs to the oxygen-dependent FAD-linked oxidoreductase family. FAD serves as cofactor.

Functionally, FAD-linked oxidoreductase; part of the gene cluster that mediates the biosynthesis of malbrancheamide, a dichlorinated fungal indole alkaloid that belongs to a family of natural products containing a characteristic bicyclo[2.2.2]diazaoctane core. The first step of malbrancheamide biosynthesis involves coupling of L-proline and L-tryptophan by malG, a bimodular NRPS, to produce L-Pro-L-Trp aldehyde through reductive offloading. This compound undergoes spontaneous cyclization and dehydration to give a dienamine which is reverse prenylated at C-2 by malE. The other prenyltransferase present in the cluster, malB, displays modest activity, suggesting that may be a redundant gene in the pathway. Subsequently, a [4+2] Diels-Alder cyclo-addition catalyzed by the bifunctional enzyme malC forms the characteristic bicyclo[2.2.2]diazaoctane ring of premalbrancheamid. Finally, the flavin-dependent halogenase malA catalyzes the iterative dichlorination of the indole ring of premalbrancheamide to yield C-9 monochlorinated malbrancheamide B, C-8 monochlorinated isomalbrancheamide B, and dichlorinated malbrancheamide. MalA is also able to brominate premalbrancheamide at C-9 to yield malbrancheamide C, and, to a lesser extend, at C-8 to yield isomalbrancheamide C. Finally, malA can brominate C-9 monochlorinated malbrancheamide B at C-8 to yield malbrancheamide D, or C-8 monochlorinated isomalbrancheamide B at C-9 to produce isomalbrancheamide D. This chain is FAD-linked oxidoreductase malF, found in Malbranchea aurantiaca.